Here is a 201-residue protein sequence, read N- to C-terminus: Adenylyl-sulfate kinase (201 aa).

ATP is bound at residue 35-42; it reads GLSGSGKS. Ser-109 acts as the Phosphoserine intermediate in catalysis.

This sequence belongs to the APS kinase family.

It carries out the reaction adenosine 5'-phosphosulfate + ATP = 3'-phosphoadenylyl sulfate + ADP + H(+). It participates in sulfur metabolism; hydrogen sulfide biosynthesis; sulfite from sulfate: step 2/3. Its function is as follows. Catalyzes the synthesis of activated sulfate. The polypeptide is Adenylyl-sulfate kinase (Citrobacter koseri (strain ATCC BAA-895 / CDC 4225-83 / SGSC4696)).